The following is a 673-amino-acid chain: tRNA 5-methylaminomethyl-2-thiouridine biosynthesis bifunctional protein MnmC (673 aa).

The tract at residues 1 to 245 is tRNA (mnm(5)s(2)U34)-methyltransferase; the sequence is MSHAPIQTAA…KREMLIGELP (245 aa). The FAD-dependent cmnm(5)s(2)U34 oxidoreductase stretch occupies residues 272-673; that stretch reads IGGGVASALT…VRKLLKGRAV (402 aa).

It in the N-terminal section; belongs to the methyltransferase superfamily. tRNA (mnm(5)s(2)U34)-methyltransferase family. In the C-terminal section; belongs to the DAO family. It depends on FAD as a cofactor.

The protein resides in the cytoplasm. It carries out the reaction 5-aminomethyl-2-thiouridine(34) in tRNA + S-adenosyl-L-methionine = 5-methylaminomethyl-2-thiouridine(34) in tRNA + S-adenosyl-L-homocysteine + H(+). Functionally, catalyzes the last two steps in the biosynthesis of 5-methylaminomethyl-2-thiouridine (mnm(5)s(2)U) at the wobble position (U34) in tRNA. Catalyzes the FAD-dependent demodification of cmnm(5)s(2)U34 to nm(5)s(2)U34, followed by the transfer of a methyl group from S-adenosyl-L-methionine to nm(5)s(2)U34, to form mnm(5)s(2)U34. The protein is tRNA 5-methylaminomethyl-2-thiouridine biosynthesis bifunctional protein MnmC of Serratia proteamaculans (strain 568).